We begin with the raw amino-acid sequence, 466 residues long: Uronate isomerase (466 aa).

Belongs to the metallo-dependent hydrolases superfamily. Uronate isomerase family.

It catalyses the reaction D-glucuronate = D-fructuronate. The enzyme catalyses aldehydo-D-galacturonate = keto-D-tagaturonate. The protein operates within carbohydrate metabolism; pentose and glucuronate interconversion. This Rhizorhabdus wittichii (strain DSM 6014 / CCUG 31198 / JCM 15750 / NBRC 105917 / EY 4224 / RW1) (Sphingomonas wittichii) protein is Uronate isomerase.